The chain runs to 185 residues: Ribosome-recycling factor (185 aa).

Residues 138-185 are disordered; that stretch reads ALKKQEKDGEITEDEERRLEKEVQKVTDESTKKIDQMADNKRKEIIQG.

This sequence belongs to the RRF family.

Its subcellular location is the cytoplasm. Its function is as follows. Responsible for the release of ribosomes from messenger RNA at the termination of protein biosynthesis. May increase the efficiency of translation by recycling ribosomes from one round of translation to another. This chain is Ribosome-recycling factor, found in Lactobacillus delbrueckii subsp. bulgaricus (strain ATCC BAA-365 / Lb-18).